The sequence spans 75 residues: Large ribosomal subunit protein bL31 (75 aa).

Part of the 50S ribosomal subunit.

In terms of biological role, binds the 23S rRNA. This chain is Large ribosomal subunit protein bL31, found in Rhodopseudomonas palustris (strain ATCC BAA-98 / CGA009).